Consider the following 526-residue polypeptide: Glucose-6-phosphate isomerase (526 aa).

Residue Glu-347 is the Proton donor of the active site. Residues His-378 and Lys-493 contribute to the active site.

This sequence belongs to the GPI family.

The protein resides in the cytoplasm. It catalyses the reaction alpha-D-glucose 6-phosphate = beta-D-fructose 6-phosphate. It functions in the pathway carbohydrate biosynthesis; gluconeogenesis. It participates in carbohydrate degradation; glycolysis; D-glyceraldehyde 3-phosphate and glycerone phosphate from D-glucose: step 2/4. In terms of biological role, catalyzes the reversible isomerization of glucose-6-phosphate to fructose-6-phosphate. This chain is Glucose-6-phosphate isomerase, found in Chlamydia pneumoniae (Chlamydophila pneumoniae).